The primary structure comprises 70 residues: Small ribosomal subunit protein bS21B (70 aa).

It belongs to the bacterial ribosomal protein bS21 family.

The polypeptide is Small ribosomal subunit protein bS21B (Paraburkholderia xenovorans (strain LB400)).